The primary structure comprises 164 residues: Cytochrome c-type biogenesis protein CcmE (164 aa).

Topologically, residues 1–8 (MNPRRKSR) are cytoplasmic. The helical; Signal-anchor for type II membrane protein transmembrane segment at 9–29 (LYLAVVVLIGIGLTTTLVLYA) threads the bilayer. Topologically, residues 30-164 (LRSNIDLFYT…NSTAAQGNAS (135 aa)) are periplasmic. Heme is bound by residues H130 and Y134. Residues 131–150 (DEKYTPPEVKEAMKENHTRP) show a composition bias toward basic and acidic residues. The disordered stretch occupies residues 131-164 (DEKYTPPEVKEAMKENHTRPAEAYNSTAAQGNAS). The span at 154–164 (YNSTAAQGNAS) shows a compositional bias: polar residues.

This sequence belongs to the CcmE/CycJ family.

It localises to the cell inner membrane. In terms of biological role, heme chaperone required for the biogenesis of c-type cytochromes. Transiently binds heme delivered by CcmC and transfers the heme to apo-cytochromes in a process facilitated by CcmF and CcmH. The protein is Cytochrome c-type biogenesis protein CcmE of Yersinia enterocolitica serotype O:8 / biotype 1B (strain NCTC 13174 / 8081).